The primary structure comprises 141 residues: Large ribosomal subunit protein uL11 (141 aa).

The protein belongs to the universal ribosomal protein uL11 family. As to quaternary structure, part of the ribosomal stalk of the 50S ribosomal subunit. Interacts with L10 and the large rRNA to form the base of the stalk. L10 forms an elongated spine to which L12 dimers bind in a sequential fashion forming a multimeric L10(L12)X complex. One or more lysine residues are methylated.

Its function is as follows. Forms part of the ribosomal stalk which helps the ribosome interact with GTP-bound translation factors. This is Large ribosomal subunit protein uL11 from Ligilactobacillus salivarius (strain UCC118) (Lactobacillus salivarius).